A 357-amino-acid polypeptide reads, in one-letter code: tRNA pseudouridine synthase Pus10 (357 aa).

The 118-residue stretch at 1 to 118 (MNLCRECYGI…TFTFELQIRP (118 aa)) folds into the THUMP domain. Asp-187 (nucleophile) is an active-site residue. Residues Tyr-251 and Tyr-322 each coordinate substrate.

It belongs to the pseudouridine synthase Pus10 family.

The catalysed reaction is uridine(54) in tRNA = pseudouridine(54) in tRNA. The enzyme catalyses uridine(55) in tRNA = pseudouridine(55) in tRNA. Functionally, responsible for synthesis of pseudouridine from uracil-54 and uracil-55 in the psi GC loop of transfer RNAs. The polypeptide is tRNA pseudouridine synthase Pus10 (Archaeoglobus fulgidus (strain ATCC 49558 / DSM 4304 / JCM 9628 / NBRC 100126 / VC-16)).